The sequence spans 176 residues: Adenine phosphoribosyltransferase (176 aa).

The protein belongs to the purine/pyrimidine phosphoribosyltransferase family. As to quaternary structure, homodimer.

The protein resides in the cytoplasm. It carries out the reaction AMP + diphosphate = 5-phospho-alpha-D-ribose 1-diphosphate + adenine. It functions in the pathway purine metabolism; AMP biosynthesis via salvage pathway; AMP from adenine: step 1/1. Its function is as follows. Catalyzes a salvage reaction resulting in the formation of AMP, that is energically less costly than de novo synthesis. The polypeptide is Adenine phosphoribosyltransferase (Borrelia garinii subsp. bavariensis (strain ATCC BAA-2496 / DSM 23469 / PBi) (Borreliella bavariensis)).